A 1699-amino-acid chain; its full sequence is DNA polymerase (1699 aa).

2 DOD-type homing endonuclease domains span residues 770–903 (LLGY…SLGI) and 1222–1361 (LIGL…LVGV).

This sequence belongs to the DNA polymerase type-B family. In terms of processing, this protein undergoes a protein self splicing that involves a post-translational excision of the intervening region (intein) followed by peptide ligation.

It catalyses the reaction DNA(n) + a 2'-deoxyribonucleoside 5'-triphosphate = DNA(n+1) + diphosphate. Functionally, in addition to polymerase activity, this DNA polymerase exhibits 3' to 5' exonuclease activity. Its function is as follows. PI-TspGE8I and PI-TspGE8II are endonucleases. This is DNA polymerase (pol) from Thermococcus sp. (strain GE8).